Reading from the N-terminus, the 181-residue chain is Probable N-acetyltransferase YjcK (181 aa).

Residues I7–L172 form the N-acetyltransferase domain.

This sequence belongs to the acetyltransferase family. RimJ subfamily.

The catalysed reaction is an N-terminal L-alpha-aminoacyl-[protein] + acetyl-CoA = N-terminal N(alpha)-acetyl-L-alpha-aminoacyl-[protein] + CoA + H(+). In terms of biological role, probable N-terminal protein acetyltransferase. This Bacillus subtilis (strain 168) protein is Probable N-acetyltransferase YjcK (yjcK).